Here is a 596-residue protein sequence, read N- to C-terminus: Sphingomyelinase C 1 (596 aa).

Residues 1–36 (MITKRNIPCKKNWKYKKKSISLTLITICYMFLFLTS) form the signal peptide. Positions 63–118 (KIEDSTNTDPSSNVNEEDENSINANANDNAPSDSDSSNPRSPDKNPVNPTSPNSSS) are disordered. The span at 67–76 (STNTDPSSNV) shows a compositional bias: polar residues. A compositionally biased stretch (low complexity) spans 83 to 118 (SINANANDNAPSDSDSSNPRSPDKNPVNPTSPNSSS).

The protein localises to the secreted. The enzyme catalyses a sphingomyelin + H2O = phosphocholine + an N-acylsphing-4-enine + H(+). This Leptospira interrogans serogroup Icterohaemorrhagiae serovar copenhageni (strain Fiocruz L1-130) protein is Sphingomyelinase C 1 (sph1).